A 3122-amino-acid chain; its full sequence is DNA polymerase zeta catalytic subunit (3122 aa).

Disordered stretches follow at residues 270–289 (QRRR…SQDC), 425–457 (GYQG…NEPQ), 487–509 (LCRN…EMEW), 524–545 (LDGT…RAHS), and 842–886 (TSTK…TFEN). Positions 277-286 (ESSQISQPES) are enriched in polar residues. The span at 497 to 509 (EEDDSSSEEEMEW) shows a compositional bias: acidic residues. Polar residues-rich tracts occupy residues 533-545 (DNPL…RAHS) and 842-860 (TSTK…THND). Ser-1029 is subject to Phosphoserine. Disordered stretches follow at residues 1034-1075 (YPIY…TLSF), 1154-1285 (VYNT…PTGI), 1429-1453 (VSVS…ESQT), 1538-1616 (KAQS…LSDD), 1842-1869 (NDVL…SFTP), 1959-1979 (NPRP…ESSN), and 2091-2138 (AAVP…RHSS). A Phosphothreonine modification is found at Thr-1040. Composition is skewed to basic residues over residues 1042 to 1063 (KKSH…KQHR) and 1166 to 1179 (KASR…KSKA). Residues 1215–1239 (RANEKSLSRKHAIPADEKMKPHSEA) are compositionally biased toward basic and acidic residues. Over residues 1243 to 1270 (PNHQSVSELTSSSGAQALSKQKEMSQTG) the composition is skewed to polar residues. Residues 1429–1440 (VSVSEQSKTSET) are compositionally biased toward low complexity. Polar residues-rich tracts occupy residues 1441–1453 (CSPG…ESQT) and 1538–1561 (KAQS…ISVS). The segment covering 1566–1587 (KANKRTRPVTSPRKPRTPRRTK) has biased composition (basic residues). Positions 1588–1598 (PKEQTPRRLKV) are enriched in basic and acidic residues. Over residues 1602–1615 (NLQTSGHLDNSLSD) the composition is skewed to polar residues. A mediates interaction with MAD2L2 region spans residues 1844–1895 (VLTPTPDSSPRSTSSPLQSKNGSFTPRTAHILKPLMSPPSREEIVATLLDHD). Over residues 1846–1859 (TPTPDSSPRSTSSP) the composition is skewed to low complexity. Residues 1860–1869 (LQSKNGSFTP) show a composition bias toward polar residues. Residue Ser-1964 is modified to Phosphoserine. Residues Cys-3034, Cys-3037, Cys-3046, and Cys-3049 each coordinate Zn(2+). The segment at 3034–3049 (CPVCDDLTQHGICSKC) adopts a CysA-type zinc-finger fold. Positions 3078, 3081, 3091, and 3096 each coordinate [4Fe-4S] cluster. Positions 3078–3096 (CRNCTGSFDRHIPCVSLNC) match the CysB motif motif.

The protein belongs to the DNA polymerase type-B family. Heterodimer with MAD2L2. This dimer forms the minimal DNA polymerase zeta complex (Pol-zeta2), with REV3L bearing DNA polymerase catalytic activity, although its activity is very low in this context. Component of the tetrameric Pol-zeta complex (Pol-zeta4), which consists of REV3L, MAD2L2, POLD2 and POLD3; Pol-zeta4 is the fully active form of DNA polymerase zeta. The cofactor is [4Fe-4S] cluster.

It is found in the nucleus. The catalysed reaction is DNA(n) + a 2'-deoxyribonucleoside 5'-triphosphate = DNA(n+1) + diphosphate. In terms of biological role, catalytic subunit of the DNA polymerase zeta complex, an error-prone polymerase specialized in translesion DNA synthesis (TLS). Lacks an intrinsic 3'-5' exonuclease activity and thus has no proofreading function. In Mus musculus (Mouse), this protein is DNA polymerase zeta catalytic subunit (Rev3l).